A 368-amino-acid chain; its full sequence is Ferredoxin--NADP reductase (368 aa).

FAD-binding residues include Asp56, Gln64, Tyr69, Val109, Phe144, Asp310, and Thr351.

The protein belongs to the ferredoxin--NADP reductase type 2 family. As to quaternary structure, homodimer. It depends on FAD as a cofactor.

The enzyme catalyses 2 reduced [2Fe-2S]-[ferredoxin] + NADP(+) + H(+) = 2 oxidized [2Fe-2S]-[ferredoxin] + NADPH. The protein is Ferredoxin--NADP reductase of Leptothrix cholodnii (strain ATCC 51168 / LMG 8142 / SP-6) (Leptothrix discophora (strain SP-6)).